A 275-amino-acid polypeptide reads, in one-letter code: Lectin 8 (275 aa).

The first 31 residues, 1 to 31, serve as a signal peptide directing secretion; it reads MANSNPKLLVTQNPFSVFLLTFLLLITNVKS. 2 N-linked (GlcNAc...) asparagine glycosylation sites follow: asparagine 55 and asparagine 150.

It belongs to the leguminous lectin family.

In terms of biological role, may be involved in arbuscular mycorrhizal (AM) symbiosis with AM fungi. This is Lectin 8 from Medicago truncatula (Barrel medic).